Consider the following 463-residue polypeptide: Bifunctional protein HldE (463 aa).

Positions 1-315 (MKKILVIGDL…LILNQTHPKI (315 aa)) are ribokinase. 191 to 194 (NRAE) lines the ATP pocket. D260 is an active-site residue. The cytidylyltransferase stretch occupies residues 334–463 (FTNGCFDILH…IEKIKRTHND (130 aa)).

The protein in the N-terminal section; belongs to the carbohydrate kinase PfkB family. This sequence in the C-terminal section; belongs to the cytidylyltransferase family. As to quaternary structure, homodimer.

The catalysed reaction is D-glycero-beta-D-manno-heptose 7-phosphate + ATP = D-glycero-beta-D-manno-heptose 1,7-bisphosphate + ADP + H(+). The enzyme catalyses D-glycero-beta-D-manno-heptose 1-phosphate + ATP + H(+) = ADP-D-glycero-beta-D-manno-heptose + diphosphate. Its pathway is nucleotide-sugar biosynthesis; ADP-L-glycero-beta-D-manno-heptose biosynthesis; ADP-L-glycero-beta-D-manno-heptose from D-glycero-beta-D-manno-heptose 7-phosphate: step 1/4. The protein operates within nucleotide-sugar biosynthesis; ADP-L-glycero-beta-D-manno-heptose biosynthesis; ADP-L-glycero-beta-D-manno-heptose from D-glycero-beta-D-manno-heptose 7-phosphate: step 3/4. It participates in bacterial outer membrane biogenesis; LPS core biosynthesis. Functionally, catalyzes the phosphorylation of D-glycero-D-manno-heptose 7-phosphate at the C-1 position to selectively form D-glycero-beta-D-manno-heptose-1,7-bisphosphate. In terms of biological role, catalyzes the ADP transfer from ATP to D-glycero-beta-D-manno-heptose 1-phosphate, yielding ADP-D-glycero-beta-D-manno-heptose. This chain is Bifunctional protein HldE, found in Helicobacter pylori (strain J99 / ATCC 700824) (Campylobacter pylori J99).